A 567-amino-acid polypeptide reads, in one-letter code: uncharacterized protein (567 aa).

A disordered region spans residues 1–26; that stretch reads MPSEKATTRHLPGAVETLSPRTGRRP. The next 6 helical transmembrane spans lie at 57–77, 90–110, 142–162, 173–193, 221–241, and 257–277; these read AILV…TVAF, VSFG…TYWL, VALA…IIYG, LFSM…LTEF, MLVW…TAIF, and VLIL…ILAW. The 53-residue stretch at 277–329 folds into the HAMP domain; it reads WLTATPVRVVREALNRVEQGDLSGDLVVFDGTELGELQRGFNRMVEGLRERER. Residues 361 to 485 form the Guanylate cyclase domain; it reads AVVFVDIVGS…EPVNEAARLC (125 aa).

This sequence belongs to the adenylyl cyclase class-3 family.

Its subcellular location is the cell membrane. This is an uncharacterized protein from Mycobacterium bovis (strain ATCC BAA-935 / AF2122/97).